We begin with the raw amino-acid sequence, 129 residues long: Small ribosomal subunit protein uS8 (129 aa).

Belongs to the universal ribosomal protein uS8 family. As to quaternary structure, part of the 30S ribosomal subunit.

In terms of biological role, one of the primary rRNA binding proteins, it binds directly to 16S rRNA central domain where it helps coordinate assembly of the platform of the 30S subunit. The protein is Small ribosomal subunit protein uS8 of Archaeoglobus fulgidus (strain ATCC 49558 / DSM 4304 / JCM 9628 / NBRC 100126 / VC-16).